Consider the following 377-residue polypeptide: MLVHQVNTKLCSAKQFTHLAKVVTPALSYQASSVYSANLPRLAASPRLFSTTSSAQLRDFFPVKETEHIRQTPPTWPHHGLTEKEMVDVVPGHRKPRTLGDKFAWSLVRISRWGMDKVSGLSSEQQQINKGSPTTSIVAAKPLTEAQWLSRFIFLESIAAVPGMVAGMLRHLHSLRRLKRDNGWIETLLEEAYNERMHLLTFLKMCEPGWLMKILIIGAQGVYFNAMFVAYLISPKICHRFVGYLEEEAVHTYTRSIEELERGDLPKWSDPKFQVPEIAVSYWGMPEGHRTMRDLLLYIRADEANHRGVHHTLGNLNQVEDPNPFVSDYKGDKPRPVAASRPEGFEREEVIGKEVIGKEVIEKDVIGKEVLGKQVSV.

Residues 149 to 169 (LSRFIFLESIAAVPGMVAGML) traverse the membrane as a helical segment. Residues Glu156, Glu195, and His198 each contribute to the Fe cation site. A helical transmembrane segment spans residues 214-234 (ILIIGAQGVYFNAMFVAYLIS). Positions 246, 303, and 306 each coordinate Fe cation.

The protein belongs to the alternative oxidase family. Requires Fe cation as cofactor.

The protein resides in the mitochondrion inner membrane. Catalyzes cyanide-resistant oxygen consumption. May increase respiration when the cytochrome respiratory pathway is restricted, or in response to low temperatures. The protein is Alternative oxidase, mitochondrial (AOX1) of Pyricularia oryzae (strain 70-15 / ATCC MYA-4617 / FGSC 8958) (Rice blast fungus).